A 259-amino-acid chain; its full sequence is tRNA (guanine-N(1)-)-methyltransferase (259 aa).

Residues G117 and 137 to 142 contribute to the S-adenosyl-L-methionine site; that span reads LGDFVL.

This sequence belongs to the RNA methyltransferase TrmD family. As to quaternary structure, homodimer.

The protein localises to the cytoplasm. It carries out the reaction guanosine(37) in tRNA + S-adenosyl-L-methionine = N(1)-methylguanosine(37) in tRNA + S-adenosyl-L-homocysteine + H(+). Specifically methylates guanosine-37 in various tRNAs. This chain is tRNA (guanine-N(1)-)-methyltransferase, found in Polaromonas sp. (strain JS666 / ATCC BAA-500).